Reading from the N-terminus, the 55-residue chain is Large ribosomal subunit protein bL33 (55 aa).

It belongs to the bacterial ribosomal protein bL33 family.

The protein is Large ribosomal subunit protein bL33 of Clavibacter sepedonicus (Clavibacter michiganensis subsp. sepedonicus).